Consider the following 237-residue polypeptide: Large ribosomal subunit protein uL1 (237 aa).

It belongs to the universal ribosomal protein uL1 family. Part of the 50S ribosomal subunit.

Its function is as follows. Binds directly to 23S rRNA. The L1 stalk is quite mobile in the ribosome, and is involved in E site tRNA release. In terms of biological role, protein L1 is also a translational repressor protein, it controls the translation of the L11 operon by binding to its mRNA. This chain is Large ribosomal subunit protein uL1, found in Dehalococcoides mccartyi (strain ATCC BAA-2266 / KCTC 15142 / 195) (Dehalococcoides ethenogenes (strain 195)).